We begin with the raw amino-acid sequence, 194 residues long: Oligoribonuclease (194 aa).

In terms of domain architecture, Exonuclease spans 11-174 (LIWIDLEMTG…SDVRDSINEL (164 aa)). Residue tyrosine 132 is part of the active site.

Belongs to the oligoribonuclease family.

It localises to the cytoplasm. 3'-to-5' exoribonuclease specific for small oligoribonucleotides. The chain is Oligoribonuclease from Xanthomonas oryzae pv. oryzae (strain MAFF 311018).